The primary structure comprises 201 residues: MSYIPVVIEQTSRGERAYDIYSRLLKERIIFVCSTVEDHMANLIVAQLLFLEAENPKKDIYMYINSPGGVVTAGLAIYDTMQFIKPKVATLCIGQACSMGSLLLCGGEHGMRYSLPHSRIMIHQPSGGYKGQATDIEIHARETLKIKKLLNELYSKHTEQALKHIEKSMERDNFMSPGEAKKFGLVDNIISSRDAMALLHK.

Serine 98 serves as the catalytic Nucleophile. Histidine 123 is a catalytic residue.

This sequence belongs to the peptidase S14 family. In terms of assembly, fourteen ClpP subunits assemble into 2 heptameric rings which stack back to back to give a disk-like structure with a central cavity, resembling the structure of eukaryotic proteasomes.

The protein resides in the cytoplasm. It catalyses the reaction Hydrolysis of proteins to small peptides in the presence of ATP and magnesium. alpha-casein is the usual test substrate. In the absence of ATP, only oligopeptides shorter than five residues are hydrolyzed (such as succinyl-Leu-Tyr-|-NHMec, and Leu-Tyr-Leu-|-Tyr-Trp, in which cleavage of the -Tyr-|-Leu- and -Tyr-|-Trp bonds also occurs).. Functionally, cleaves peptides in various proteins in a process that requires ATP hydrolysis. Has a chymotrypsin-like activity. Plays a major role in the degradation of misfolded proteins. The sequence is that of ATP-dependent Clp protease proteolytic subunit from Rickettsia typhi (strain ATCC VR-144 / Wilmington).